The following is a 332-amino-acid chain: Putative D-threonate 4-phosphate dehydrogenase (332 aa).

Substrate contacts are provided by H140 and T141. A divalent metal cation is bound by residues H170, H214, and H270. Residues K278, N287, and R296 each contribute to the substrate site.

Belongs to the PdxA family. PdxA2 subfamily. In terms of assembly, homodimer. Requires a divalent metal cation as cofactor.

It carries out the reaction 4-O-phospho-D-threonate + NAD(+) = dihydroxyacetone phosphate + CO2 + NADH. Its function is as follows. Catalyzes the NAD-dependent oxidation and subsequent decarboxylation of D-threonate 4-phosphate to produce dihydroxyacetone phosphate (DHAP). The chain is Putative D-threonate 4-phosphate dehydrogenase from Oceanobacillus iheyensis (strain DSM 14371 / CIP 107618 / JCM 11309 / KCTC 3954 / HTE831).